The primary structure comprises 129 residues: Phosphoribosyl-AMP cyclohydrolase (129 aa).

D76 provides a ligand contact to Mg(2+). C77 is a binding site for Zn(2+). D78 and D80 together coordinate Mg(2+). 2 residues coordinate Zn(2+): C97 and C104.

The protein belongs to the PRA-CH family. In terms of assembly, homodimer. Requires Mg(2+) as cofactor. It depends on Zn(2+) as a cofactor.

It is found in the cytoplasm. The catalysed reaction is 1-(5-phospho-beta-D-ribosyl)-5'-AMP + H2O = 1-(5-phospho-beta-D-ribosyl)-5-[(5-phospho-beta-D-ribosylamino)methylideneamino]imidazole-4-carboxamide. It participates in amino-acid biosynthesis; L-histidine biosynthesis; L-histidine from 5-phospho-alpha-D-ribose 1-diphosphate: step 3/9. Functionally, catalyzes the hydrolysis of the adenine ring of phosphoribosyl-AMP. The chain is Phosphoribosyl-AMP cyclohydrolase from Verminephrobacter eiseniae (strain EF01-2).